A 288-amino-acid polypeptide reads, in one-letter code: ATP synthase gamma chain (288 aa).

Belongs to the ATPase gamma chain family. In terms of assembly, F-type ATPases have 2 components, CF(1) - the catalytic core - and CF(0) - the membrane proton channel. CF(1) has five subunits: alpha(3), beta(3), gamma(1), delta(1), epsilon(1). CF(0) has three main subunits: a, b and c.

It is found in the cell inner membrane. In terms of biological role, produces ATP from ADP in the presence of a proton gradient across the membrane. The gamma chain is believed to be important in regulating ATPase activity and the flow of protons through the CF(0) complex. This chain is ATP synthase gamma chain, found in Laribacter hongkongensis (strain HLHK9).